Reading from the N-terminus, the 256-residue chain is Small ribosomal subunit protein uS2 (256 aa).

The stretch at 104–149 (NFKTISQRVHRLEELEALFASPEIEERPKKEQVRLKHELERLQKYL) forms a coiled coil.

Belongs to the universal ribosomal protein uS2 family. Part of the 30S ribosomal subunit. Contacts protein S8.

In terms of biological role, spans the head-body hinge region of the 30S subunit. Is loosely associated with the 30S subunit. The polypeptide is Small ribosomal subunit protein uS2 (rpsB) (Thermus thermophilus (strain ATCC BAA-163 / DSM 7039 / HB27)).